The sequence spans 417 residues: Gamma-glutamyl phosphate reductase (417 aa).

This sequence belongs to the gamma-glutamyl phosphate reductase family.

It is found in the cytoplasm. It carries out the reaction L-glutamate 5-semialdehyde + phosphate + NADP(+) = L-glutamyl 5-phosphate + NADPH + H(+). It functions in the pathway amino-acid biosynthesis; L-proline biosynthesis; L-glutamate 5-semialdehyde from L-glutamate: step 2/2. Functionally, catalyzes the NADPH-dependent reduction of L-glutamate 5-phosphate into L-glutamate 5-semialdehyde and phosphate. The product spontaneously undergoes cyclization to form 1-pyrroline-5-carboxylate. The polypeptide is Gamma-glutamyl phosphate reductase (Pectobacterium carotovorum subsp. carotovorum (strain PC1)).